The sequence spans 90 residues: uncharacterized protein (90 aa).

This is an uncharacterized protein from Rickettsia prowazekii (strain Madrid E).